The following is a 357-amino-acid chain: Type II methyltransferase M1.HgaI (357 aa).

The SAM-dependent MTase C5-type domain occupies 5 to 357 (IMGLSLFSSA…NITREIFNEN (353 aa)). Residue C83 is part of the active site.

Belongs to the class I-like SAM-binding methyltransferase superfamily. C5-methyltransferase family.

The catalysed reaction is a 2'-deoxycytidine in DNA + S-adenosyl-L-methionine = a 5-methyl-2'-deoxycytidine in DNA + S-adenosyl-L-homocysteine + H(+). Functionally, a methylase that recognizes DNA with the sequence 5'-GCGTC-3', methylates C-2, and protects the DNA from cleavage by the HgaI endonuclease. The polypeptide is Type II methyltransferase M1.HgaI (hgaIAM) (Avibacterium volantium (Pasteurella volantium)).